The chain runs to 700 residues: UvrABC system protein C (700 aa).

One can recognise a GIY-YIG domain in the interval 11 to 90; that stretch reads TTPGVYLYKD…IKKHRPRYNI (80 aa). Residues 200–235 enclose the UVR domain; it reads TELIDMLRADMQAASDALEFEEAALLRDQLQAVERT.

The protein belongs to the UvrC family. In terms of assembly, interacts with UvrB in an incision complex.

It localises to the cytoplasm. Its function is as follows. The UvrABC repair system catalyzes the recognition and processing of DNA lesions. UvrC both incises the 5' and 3' sides of the lesion. The N-terminal half is responsible for the 3' incision and the C-terminal half is responsible for the 5' incision. This Oleidesulfovibrio alaskensis (strain ATCC BAA-1058 / DSM 17464 / G20) (Desulfovibrio alaskensis) protein is UvrABC system protein C.